We begin with the raw amino-acid sequence, 868 residues long: Protein NIP100 (868 aa).

Positions 34–84 (GETQFAKGIWYGIELDKPLGKNDGSANGIRYFDIDLKKANSNGGYYGLFCK) constitute a CAP-Gly domain. Coiled-coil stretches lie at residues 101 to 175 (LNGN…HLDN), 207 to 375 (LDQT…QEEL), and 645 to 776 (SLLS…QIKE).

As to quaternary structure, component of the dynactin complex composed of at least ARP1, JNM1, NIP100 and ARP10. Dynactin comprises a short rod of the ARP1 filament attached to ARP10 at its pointed-end and probably associated with the capping protein at its barbed-end. The rod is implicated in dynein cargo binding. A sidearm formed by NIP100 projects from the ARP1 filament and is implicated in motor binding.

The protein resides in the cytoplasm. Its subcellular location is the cytoskeleton. The protein localises to the spindle pole. Functionally, motor-binding component of the dynactin complex which assists cytoplasmic dynein by increasing its processivity and by regulation of its cargo binding. The dynactin complex is required for the spindle translocation late in anaphase and is involved in a cell wall synthesis checkpoint. This Saccharomyces cerevisiae (strain ATCC 204508 / S288c) (Baker's yeast) protein is Protein NIP100 (NIP100).